Consider the following 210-residue polypeptide: 3-hexulose-6-phosphate synthase (210 aa).

This sequence belongs to the HPS/KGPDC family. HPS subfamily.

The enzyme catalyses D-ribulose 5-phosphate + formaldehyde = D-arabino-hex-3-ulose 6-phosphate. It functions in the pathway one-carbon metabolism; formaldehyde assimilation via RuMP pathway; D-fructose 6-phosphate from D-ribulose 5-phosphate and formaldehyde: step 1/2. Catalyzes the condensation of ribulose 5-phosphate with formaldehyde to form 3-hexulose 6-phosphate. This Staphylococcus aureus (strain NCTC 8325 / PS 47) protein is 3-hexulose-6-phosphate synthase.